Reading from the N-terminus, the 2149-residue chain is Non-reducing polyketide synthase PvBS090_009107 (2149 aa).

The N-terminal acylcarrier protein transacylase domain (SAT) stretch occupies residues 8 to 244; the sequence is YLFGDQTGEF…VRVPVHAPYH (237 aa). The Ketosynthase family 3 (KS3) domain maps to 375–806; the sequence is QSKIAIIGLS…GGNTALLIED (432 aa). Catalysis depends on for beta-ketoacyl synthase activity residues cysteine 547, histidine 682, and histidine 724. A malonyl-CoA:ACP transacylase (MAT) domain region spans residues 911–1231; it reads FVFTGQGAQY…LSAIYLAGVD (321 aa). Serine 1000 serves as the catalytic For acyl/malonyl transferase activity. The interval 1290-1604 is product template (PT) domain; sequence TTSVQRIVET…RQVLNTVLPP (315 aa). An N-terminal hotdog fold region spans residues 1294-1426; it reads QRIVETRDEG…CLVKFSDTHL (133 aa). A PKS/mFAS DH domain is found at 1294 to 1599; it reads QRIVETRDEG…FQGVPRQVLN (306 aa). The Proton acceptor; for dehydratase activity role is filled by histidine 1326. Residues 1454 to 1599 form a C-terminal hotdog fold region; the sequence is SHRMHRGMFY…FQGVPRQVLN (146 aa). Aspartate 1512 (proton donor; for dehydratase activity) is an active-site residue. Residues 1604–1631 form a disordered region; sequence PAGGSKAAPRTTARAVPPPPINVEKPKS. The region spanning 1649–1726 is the Carrier 1 domain; that stretch reads SAGPSVLVQA…DLKQLLSQAS (78 aa). Serine 1686 is modified (O-(pantetheine 4'-phosphoryl)serine). Composition is skewed to low complexity over residues 1722–1731 and 1744–1755; these read LSQASPSDSS and SSSTEPSTPGTP. Residues 1722–1763 are disordered; the sequence is LSQASPSDSSDSSEESHYSFRDSSSTEPSTPGTPAFFSPKRG. Residues 1769–1846 enclose the Carrier 2 domain; the sequence is VGESETIKTI…AVETALDLKP (78 aa). Serine 1806 bears the O-(pantetheine 4'-phosphoryl)serine mark. The tract at residues 1875–2147 is thioesterase (TE) domain; that stretch reads STHPPATSIL…KLSAFIGRAM (273 aa). Residue serine 1965 is the For thioesterase activity of the active site.

It catalyses the reaction 6 malonyl-CoA + acetyl-CoA + 6 H(+) = naphtopyrone YWA1 + 6 CO2 + 7 CoA + H2O. It participates in secondary metabolite biosynthesis. It functions in the pathway pigment biosynthesis. Functionally, non-reducing polyketide synthase; part of the gene cluster 24 that mediates the biosynthesis of a pigment with an aromatic structure protecting the pigmented fungus from both ionizing and non-ionizing radiations based on a mechanism similar to melanin, that is, free radical quenching and spherical spatial arrangement. Catalyzes the biosynthesis of the gamma-naphthopyrone precursor YWA1, via condensation of one acetyl-CoA starter unit with 6 malonyl-CoA units. YWA1 is probably further processed by the additional enzymes present within the cluster 24, however these additional steps have not been characterized yet. YWA1 is not converted to DHN-melanin in Byssochlamys spectabilis since the use of the DHN-melanin pathway inhibitor pyroquilon does not result in a loss of pigmentation. This Byssochlamys spectabilis (Paecilomyces variotii) protein is Non-reducing polyketide synthase PvBS090_009107.